A 351-amino-acid chain; its full sequence is Photosystem II D2 protein (351 aa).

Residues 39–59 (TAYLAVGGWMTGTTFVTSWYT) traverse the membrane as a helical segment. H116 provides a ligand contact to chlorophyll a. A helical membrane pass occupies residues 123 to 139 (GFCLRQFEIARLVGIRP). Positions 128 and 141 each coordinate pheophytin a. Residues 151 to 164 (VFVSVFLLYPLGQA) form a helical membrane-spanning segment. Position 196 (H196) interacts with chlorophyll a. A helical transmembrane segment spans residues 206–226 (GALLCAIHGATVENTLFEDGD). A plastoquinone is bound by residues H213 and F260. H213 is a binding site for Fe cation. Fe cation is bound at residue H267. A helical transmembrane segment spans residues 277–293 (GLWTSAIGIVGLALNLR).

It belongs to the reaction center PufL/M/PsbA/D family. In terms of assembly, PSII is composed of 1 copy each of membrane proteins PsbA, PsbB, PsbC, PsbD, PsbE, PsbF, PsbH, PsbI, PsbJ, PsbK, PsbL, PsbM, PsbT, PsbX, PsbY, PsbZ, Psb30/Ycf12, at least 3 peripheral proteins of the oxygen-evolving complex and a large number of cofactors. It forms dimeric complexes. The D1/D2 heterodimer binds P680, chlorophylls that are the primary electron donor of PSII, and subsequent electron acceptors. It shares a non-heme iron and each subunit binds pheophytin, quinone, additional chlorophylls, carotenoids and lipids. There is also a Cl(-1) ion associated with D1 and D2, which is required for oxygen evolution. The PSII complex binds additional chlorophylls, carotenoids and specific lipids. is required as a cofactor.

The protein resides in the plastid. It is found in the chloroplast thylakoid membrane. It catalyses the reaction 2 a plastoquinone + 4 hnu + 2 H2O = 2 a plastoquinol + O2. Photosystem II (PSII) is a light-driven water:plastoquinone oxidoreductase that uses light energy to abstract electrons from H(2)O, generating O(2) and a proton gradient subsequently used for ATP formation. It consists of a core antenna complex that captures photons, and an electron transfer chain that converts photonic excitation into a charge separation. The D1/D2 (PsbA/PsbD) reaction center heterodimer binds P680, the primary electron donor of PSII as well as several subsequent electron acceptors. D2 is needed for assembly of a stable PSII complex. The sequence is that of Photosystem II D2 protein from Phaeodactylum tricornutum (strain CCAP 1055/1).